The following is a 652-amino-acid chain: MASAERVPVSFNKPGRVPFGEVQGYAPGHIPAYSNKHDHFFSGERSIDDNVFCGFKYQCVEFARRWLLERKGLVLPDVNWACHIFKLKNVKDAATAEEVPVIAVRNGTEAKPEPDTLIIYPSSDVNTVGHVGAITEVGDDYVCIADQNYRFHKWEASYSYKLKLQHKDGVWTIIDDIDPNDVEIPLGWVTFPGYENRPEGAAPPALHPSLHFQPPEEPYLVRKTYEPTETKANWLDLNDPAEKLFVEEFGMDVSRSRLEETTVNYYECDHEFHLRCIAYGTQLHDYFMEATAQVINDDERLRIFKIPEELWPRMRHSWKYQQTYISGRFDFAYNNETHQMKCFEYNADSASTLLECGRIQQKWAESVGLDKEGTRGSGWAVERNLRTAWATCGATGRVHFLVDDEKEEQYTALYCLQAAEAVGLEGKLCVMYDEFRFNEEGYVVDSDGVRVRNIWKTWMWESAISDYFAAQAERGADWKATPADKVRLCDLMLGKDWDILYFEPMWKLIPSNKAILPIIYHNHPDHPAILRAEYELTDELRAVGYARKPIVGRVGRNVTITDGTGEVHAESGGNFGERDMIYQELFSLTKQDGYYAIIGGWMLGDAFSGTGIREDKSIITGLDSPFAAIRIKINAIPRPLTHKDLDKLAEDE.

Residues 34-174 (SNKHDHFFSG…QHKDGVWTII (141 aa)) enclose the Peptidase C51 domain. Position 328 to 330 (328 to 330 (RFD)) interacts with ATP. Mg(2+) is bound by residues Asp330, Glu344, and Asn346. ATP contacts are provided by residues Lys513, Lys548, Gly555, Gln583, and 618–620 (IIT).

In the C-terminal section; belongs to the glutathionylspermidine synthase preATP-grasp family. The cofactor is Mg(2+). Post-translationally, the N-terminus is blocked.

The catalysed reaction is spermidine + glutathione + ATP = glutathionylspermidine + ADP + phosphate + H(+). It catalyses the reaction glutathionylspermidine + glutathione + ATP = trypanothione + ADP + phosphate + H(+). Functionally, conjugates glutathione (gamma-Glu-Cys-Gly) and glutathionylspermidine to form trypanothione (N(1),N(8)-bis(glutathionyl)spermidine), which is involved in maintaining intracellular thiol redox and in defense against oxidants. The polypeptide is Trypanothione synthetase (TRS) (Crithidia fasciculata).